The following is a 428-amino-acid chain: uncharacterized protein (428 aa).

The region spanning 241 to 351 (KEEEEQSVGK…KLLGGCERVE (111 aa)) is the Glutaredoxin domain. Acidic residues predominate over residues 386–401 (EDDDDDDDEGDDDESV). A disordered region spans residues 386–405 (EDDDDDDDEGDDDESVKEER).

This is an uncharacterized protein from Arabidopsis thaliana (Mouse-ear cress).